Here is a 227-residue protein sequence, read N- to C-terminus: Translation initiation factor 6 (227 aa).

This sequence belongs to the eIF-6 family.

Functionally, binds to the 50S ribosomal subunit and prevents its association with the 30S ribosomal subunit to form the 70S initiation complex. This is Translation initiation factor 6 from Methanococcus aeolicus (strain ATCC BAA-1280 / DSM 17508 / OCM 812 / Nankai-3).